Reading from the N-terminus, the 116-residue chain is Ribonuclease P protein component 2 (116 aa).

It belongs to the eukaryotic/archaeal RNase P protein component 2 family. Consists of a catalytic RNA component and at least 4-5 protein subunits.

Its subcellular location is the cytoplasm. The enzyme catalyses Endonucleolytic cleavage of RNA, removing 5'-extranucleotides from tRNA precursor.. Functionally, part of ribonuclease P, a protein complex that generates mature tRNA molecules by cleaving their 5'-ends. In Methanosarcina mazei (strain ATCC BAA-159 / DSM 3647 / Goe1 / Go1 / JCM 11833 / OCM 88) (Methanosarcina frisia), this protein is Ribonuclease P protein component 2.